The following is a 146-amino-acid chain: Linear conopeptide (146 aa).

An N-terminal signal peptide occupies residues 1 to 19 (MLRLIIAAAVLVSACLAYP). Positions 20–34 (QRREGAPADAANLQS) are excised as a propeptide. The residue at position 40 (Met-40) is a Methionine sulfoxide; partial; in Cn2. Propeptides lie at residues 58-80 (FLPFNPNLQMGYKRDFDENLEKR) and 104-146 (FLHN…DKEQ). The tract at residues 107 to 146 (NEKGDKHPFANVDSADTDLGQFEPSAENKNGEFRFFDKEQ) is disordered. The span at 135–146 (KNGEFRFFDKEQ) shows a compositional bias: basic and acidic residues.

In terms of tissue distribution, expressed by the venom duct.

It is found in the secreted. In Conus consors (Singed cone), this protein is Linear conopeptide.